The chain runs to 257 residues: Type III pantothenate kinase (257 aa).

6-13 (DCGNTNTV) contacts ATP. 107–110 (GPDR) is a binding site for substrate. Asp-109 functions as the Proton acceptor in the catalytic mechanism. Asp-129 contributes to the K(+) binding site. ATP is bound at residue Thr-132. Thr-184 is a substrate binding site.

This sequence belongs to the type III pantothenate kinase family. Homodimer. Requires NH4(+) as cofactor. K(+) is required as a cofactor.

It is found in the cytoplasm. It catalyses the reaction (R)-pantothenate + ATP = (R)-4'-phosphopantothenate + ADP + H(+). It functions in the pathway cofactor biosynthesis; coenzyme A biosynthesis; CoA from (R)-pantothenate: step 1/5. Catalyzes the phosphorylation of pantothenate (Pan), the first step in CoA biosynthesis. The chain is Type III pantothenate kinase from Cereibacter sphaeroides (strain ATCC 17029 / ATH 2.4.9) (Rhodobacter sphaeroides).